The primary structure comprises 340 residues: Arginase 1, mitochondrial (340 aa).

A mitochondrion-targeting transit peptide spans 1 to 24; it reads MGGVAAGTRWIHHVRRLSAAKVST. H159, D183, H185, and D187 together coordinate Mn(2+). Substrate contacts are provided by residues 185–189 and 193–195; these read HPDIY and EGN. The Mn(2+) site is built by D268 and D270. E311 is a substrate binding site.

It belongs to the arginase family. Requires Mn(2+) as cofactor.

Its subcellular location is the mitochondrion. It catalyses the reaction L-arginine + H2O = urea + L-ornithine. The protein operates within nitrogen metabolism; urea cycle; L-ornithine and urea from L-arginine: step 1/1. Its function is as follows. Catalyzes the hydrolysis of L-arginine to urea and L-ornithine. The latter can be utilized in the urea cycle or as a precursor for the synthesis of both polyamines and proline. The protein is Arginase 1, mitochondrial of Oryza sativa subsp. indica (Rice).